A 192-amino-acid chain; its full sequence is Epididymal-specific lipocalin-12 (192 aa).

The first 19 residues, 1–19 (MRLLCGLWLWLSLLKVLQA), serve as a signal peptide directing secretion. Cys88 and Cys192 are disulfide-bonded.

Belongs to the calycin superfamily. Lipocalin family. As to quaternary structure, monomer.

It localises to the secreted. Functionally, binds all-trans retinoic acid and may act as a retinoid carrier protein within the epididymis. May play a role in male fertility. The chain is Epididymal-specific lipocalin-12 (LCN12) from Homo sapiens (Human).